The primary structure comprises 1082 residues: RE1-silencing transcription factor (1082 aa).

The segment at 32 to 117 (DLHELSKAEL…SLELSAVEPQ (86 aa)) is interaction with SIN3A. The tract at residues 43 to 57 (APQLIMLANVALTGE) is interaction with SIN3B. The segment at 140-413 (PVAEDKCRSS…KSKHPTCPSK (274 aa)) is interaction with ZFP90. The C2H2-type 1 zinc-finger motif lies at 154–176 (FRCKPCQYEAESEEQFVHHIRIH). A required for binding to the neuron-restrictive silencer element region spans residues 196-207 (SGSSPAEEGEFS). 7 consecutive C2H2-type zinc fingers follow at residues 211-235 (IRCD…HHLR), 243-265 (YKCI…LRNH), 271-293 (YTCS…VRTH), 299-321 (YKCE…MRTH), 327-350 (FKCD…RQVH), 356-378 (LNCP…VELH), and 384-407 (FNCP…KSKH). 2 disordered regions span residues 408 to 809 (PTCP…ELSL) and 831 to 1027 (SKLL…KAGL). Positions 440 to 475 (EKMENEQTKTKGDVSGKKNEKPVKAVGKDASKEKKP) are enriched in basic and acidic residues. Residues 477–497 (SSVSVVQVTTRTRKSAVAAET) show a composition bias toward low complexity. Residues 581–597 (KGTKKTPPKTKTSKKGG) show a composition bias toward basic residues. Residues 630-640 (VTGSGSSQTEL) are compositionally biased toward polar residues. Pro residues-rich tracts occupy residues 684–713 (YPQP…PAPP) and 729–751 (KEPP…PPPM). Basic and acidic residues-rich tracts occupy residues 798–807 (LRKDRAEKEL) and 854–864 (NSREETPKDQE). Residues 900–909 (RVSSSEQNSA) are compositionally biased toward polar residues. At Ser-950 the chain carries Phosphoserine. Positions 985–1063 (EGIHSHDGSD…HLNRHLVNVY (79 aa)) are interaction with RCOR1. A C2H2-type 9 zinc finger spans residues 1036-1058 (FVCIFCDRSFRKEKDYSKHLNRH).

As to quaternary structure, isoform 1 and isoform 2 form heterodimers. Isoform 2: Forms homodimers and homooligomers; binds to the neuron-restrictive silencer element (NRSE) as monomer. Interacts with SIN3A, SIN3B and RCOR1. Interacts with CDYL. Interacts with EHMT1 and EHMT2 only in the presence of CDYL. Part of a complex containing at least CDYL, REST, WIZ, SETB1, EHMT1 and EHMT2. Interacts (via zinc-finger DNA-binding domain) with ZFP90 (via N- and C-termini); the interaction inhibits REST repressor activity. Interacts (via C2H2-type zinc finger 5) with PRICKLE1. Interacts with FBXW11 and BTRC. Interacts with USP7. O-glycosylated. In terms of processing, phosphorylated; phosphorylation is required for ubiquitination. Post-translationally, ubiquitinated; ubiquitination is mediated by BTRC and leads to proteasomal degradation in G2 phase. Ubiquitination increases during neuronal differentiation. Deubiquitinated by USP7; leading to its stabilization and promoting the maintenance of neural progenitor cells. As to expression, expressed in the hippocampus, including quiescent neuronal progenitor (QNP) cells, transient-amplifying progenitor (TAP) cells, neuroblasts and mature neurons (at protein level). Expressed in embryonic stem cells (at protein level). Expressed in many non-neuronal tissues including the heart and liver. Abundantly expressed in osteoblastic lineage cells. Expressed in the spleen, kidney, blood cells, cortex, neocortex and in the utricle, saccule and organ of Corti of the inner ear. Isoform 2: Expressed in the cortex, neocortex and in the utricle, saccule and organ of Corti of the inner ear.

The protein localises to the nucleus. Its subcellular location is the cytoplasm. Its function is as follows. Transcriptional repressor which binds neuron-restrictive silencer element (NRSE) and represses neuronal gene transcription in non-neuronal cells. Restricts the expression of neuronal genes by associating with two distinct corepressors, SIN3A and RCOR1, which in turn recruit histone deacetylase to the promoters of REST-regulated genes. Mediates repression by recruiting the BHC complex at RE1/NRSE sites which acts by deacetylating and demethylating specific sites on histones, thereby acting as a chromatin modifier. Transcriptional repression by REST-CDYL via the recruitment of histone methyltransferase EHMT2 may be important in transformation suppression. Represses the expression of SRRM4 in non-neural cells to prevent the activation of neural-specific splicing events and to prevent production of REST isoform 2. Repressor activity may be inhibited by forming heterodimers with isoform 2, thereby preventing binding to NRSE or binding to corepressors and leading to derepression of target genes. Also maintains repression of neuronal genes in neural stem cells, and allows transcription and differentiation into neurons by dissociation from RE1/NRSE sites of target genes. Thereby is involved in maintaining the quiescent state of adult neural stem cells and preventing premature differentiation into mature neurons. Plays a role in the developmental switch in synaptic NMDA receptor composition during postnatal development, by repressing GRIN2B expression and thereby altering NMDA receptor properties from containing primarily GRIN2B to primarily GRIN2A subunits. Acts as a regulator of osteoblast differentiation. Key repressor of gene expression in hypoxia; represses genes in hypoxia by direct binding to an RE1/NRSE site on their promoter regions. May also function in stress resistance in the brain during aging; possibly by regulating expression of genes involved in cell death and in the stress response. Repressor of gene expression in the hippocampus after ischemia by directly binding to RE1/NRSE sites and recruiting SIN3A and RCOR1 to promoters of target genes, thereby promoting changes in chromatin modifications and ischemia-induced cell death. After ischemia, might play a role in repression of miR-132 expression in hippocampal neurons, thereby leading to neuronal cell death. Binds to the 3' region of the neuron-restrictive silencer element (NRSE), with lower affinity than isoform 1. Exhibits weaker repressor activity compared to isoform 1. May negatively regulate the repressor activity of isoform 1 by binding to isoform 1, thereby preventing its binding to NRSE and leading to derepression of target genes. However, in another study, does not appear to be implicated in repressor activity of a NRSE motif-containing reporter construct nor in inhibitory activity on the isoform 1 transcriptional repressor activity. Post-transcriptional inactivation of REST by SRRM4-dependent alternative splicing into isoform 2 is required in mechanosensory hair cells in the inner ear for derepression of neuronal genes, maintenance of hair cells and hearing. In Mus musculus (Mouse), this protein is RE1-silencing transcription factor (Rest).